A 58-amino-acid chain; its full sequence is ATP synthase F(0) complex subunit k, mitochondrial (58 aa).

An N6-acetyllysine mark is found at lysine 16 and lysine 17. The helical transmembrane segment at 23 to 45 threads the bilayer; the sequence is TLTGRMNCVLATYGGIALLVLYF.

As to quaternary structure, component of the ATP synthase complex composed at least of ATP5F1A/subunit alpha, ATP5F1B/subunit beta, ATP5MC1/subunit c (homooctomer), MT-ATP6/subunit a, MT-ATP8/subunit 8, ATP5ME/subunit e, ATP5MF/subunit f, ATP5MG/subunit g, ATP5MK/subunit k, ATP5MJ/subunit j, ATP5F1C/subunit gamma, ATP5F1D/subunit delta, ATP5F1E/subunit epsilon, ATP5PF/subunit F6, ATP5PB/subunit b, ATP5PD/subunit d, ATP5PO/subunit OSCP. ATP synthase complex consists of a soluble F(1) head domain (subunits alpha(3) and beta(3)) - the catalytic core - and a membrane F(0) domain - the membrane proton channel (subunits c, a, 8, e, f, g, k and j). These two domains are linked by a central stalk (subunits gamma, delta, and epsilon) rotating inside the F1 region and a stationary peripheral stalk (subunits F6, b, d, and OSCP). The ATP synthase complex/complex V exists as a monomeric and a dimeric supercomplex that helps shape mitochondrial cristae to optimize proton flow.

It localises to the mitochondrion membrane. In terms of biological role, subunit k, of the mitochondrial membrane ATP synthase complex (F(1)F(0) ATP synthase or Complex V) that produces ATP from ADP in the presence of a proton gradient across the membrane which is generated by electron transport complexes of the respiratory chain. ATP synthase complex consist of a soluble F(1) head domain - the catalytic core - and a membrane F(1) domain - the membrane proton channel. These two domains are linked by a central stalk rotating inside the F(1) region and a stationary peripheral stalk. During catalysis, ATP synthesis in the catalytic domain of F(1) is coupled via a rotary mechanism of the central stalk subunits to proton translocation. In vivo, can only synthesize ATP although its ATP hydrolase activity can be activated artificially in vitro. Part of the complex F(0) domain. Required for dimerization of the ATP synthase complex and as such regulates ATP synthesis in the mitochondria. This is ATP synthase F(0) complex subunit k, mitochondrial from Mus musculus (Mouse).